Reading from the N-terminus, the 182-residue chain is pEARLI1-like lipid transfer protein 2 (182 aa).

The first 25 residues, 1–25 (MASKNSASLALFFALNILFFTLTAG), serve as a signal peptide directing secretion. A compositionally biased stretch (pro residues) spans 33–92 (SPKPRPLPNPKVPSPKVPTPSVPSPYVPTPSVPSPSVPTPSVPSPSVPSPNPTPVIPPRT). The tract at residues 33 to 94 (SPKPRPLPNP…TPVIPPRTPG (62 aa)) is disordered. Tandem repeats lie at residues 42 to 46 (PKVPS), 47 to 51 (PKVPT), 52 to 56 (PSVPS), 62 to 66 (PSVPS), 67 to 71 (PSVPT), 72 to 76 (PSVPS), and 77 to 81 (PSVPS). A 7 X 5 AA repeats of P-[KS]-V-P-[ST] region spans residues 42-81 (PKVPSPKVPTPSVPSPYVPTPSVPSPSVPTPSVPSPSVPS).

The protein belongs to the plant LTP family. PEARLI1 subfamily.

It localises to the secreted. The protein localises to the cell wall. Functionally, probable lipid transfer protein (LTP). May improve freezing survival. Seems to control the flowering process and lignin synthesis. Confers resistance to Botrytis cinerea. In Arabidopsis thaliana (Mouse-ear cress), this protein is pEARLI1-like lipid transfer protein 2.